A 303-amino-acid polypeptide reads, in one-letter code: D-alanine--D-alanine ligase (303 aa).

The region spanning 99-293 (TYRFLKGTVE…FEELVEIILK (195 aa)) is the ATP-grasp domain. 125–176 (GYPCVVKPRREGSSIGVFVCESDEEFQHALKEDLPRYGSVIVQKYIPGREMT) contributes to the ATP binding site. Mg(2+)-binding residues include aspartate 248, glutamate 260, and asparagine 262.

It belongs to the D-alanine--D-alanine ligase family. Mg(2+) is required as a cofactor. It depends on Mn(2+) as a cofactor.

Its subcellular location is the cytoplasm. It catalyses the reaction 2 D-alanine + ATP = D-alanyl-D-alanine + ADP + phosphate + H(+). It functions in the pathway cell wall biogenesis; peptidoglycan biosynthesis. In terms of biological role, cell wall formation. This is D-alanine--D-alanine ligase from Thermotoga maritima (strain ATCC 43589 / DSM 3109 / JCM 10099 / NBRC 100826 / MSB8).